A 147-amino-acid chain; its full sequence is Large ribosomal subunit protein bL9 (147 aa).

This sequence belongs to the bacterial ribosomal protein bL9 family.

In terms of biological role, binds to the 23S rRNA. The protein is Large ribosomal subunit protein bL9 of Bacteroides thetaiotaomicron (strain ATCC 29148 / DSM 2079 / JCM 5827 / CCUG 10774 / NCTC 10582 / VPI-5482 / E50).